We begin with the raw amino-acid sequence, 487 residues long: ATP-dependent rRNA helicase RRP3 (487 aa).

A disordered region spans residues 22–67 (IKRKALEKQQQAHANEPSPSDEDSAQSNSKDSNSNEQPEESEEIFE). The Q motif motif lies at 67–95 (ESFTELDLVPELIEACKNLNYNKPTPIQS). One can recognise a Helicase ATP-binding domain in the interval 98 to 270 (IPPALKGSDI…RASLTNPVKC (173 aa)). 111-118 (AQTGSGKT) contacts ATP. The short motif at 217–220 (DEAD) is the DEAD box element. Residues 298 to 442 (LIYLLNEFIG…ENVDKDAILA (145 aa)) enclose the Helicase C-terminal domain. The segment at 459-487 (NRRNKEKQARGKGRRGRMATRDNMDREER) is disordered. The span at 477 to 487 (ATRDNMDREER) shows a compositional bias: basic and acidic residues.

Belongs to the DEAD box helicase family. DDX47/RRP3 subfamily. In terms of assembly, interacts with the SSU processome.

The protein localises to the nucleus. The enzyme catalyses ATP + H2O = ADP + phosphate + H(+). Functionally, ATP-dependent rRNA helicase required for pre-ribosomal RNA processing. Involved in the maturation of the 35S-pre-rRNA and to its cleavage to mature 18S rRNA. The protein is ATP-dependent rRNA helicase RRP3 of Kluyveromyces lactis (strain ATCC 8585 / CBS 2359 / DSM 70799 / NBRC 1267 / NRRL Y-1140 / WM37) (Yeast).